A 300-amino-acid chain; its full sequence is Epimerase family protein SACOL0834 (300 aa).

It belongs to the NAD(P)-dependent epimerase/dehydratase family. SDR39U1 subfamily.

The polypeptide is Epimerase family protein SACOL0834 (Staphylococcus aureus (strain COL)).